A 1852-amino-acid chain; its full sequence is Voltage-dependent L-type calcium channel subunit alpha-1S (1852 aa).

The segment at 1–23 (MEPPSPQDEGLRKKQPKKPVPEI) is disordered. Residues 1–51 (MEPPSPQDEGLRKKQPKKPVPEILPRPPRALFCLTLQNPLRKACISIVEWK) are Cytoplasmic-facing. An I repeat occupies 38-337 (NPLRKACISI…LVLGVLSGEF (300 aa)). Residues 52-70 (PFETIILLTIFANCVALAV) traverse the membrane as a helical segment. The Extracellular portion of the chain corresponds to 71–85 (YLPMPEDDNNTLNLG). Asparagine 79 is a glycosylation site (N-linked (GlcNAc...) asparagine). A helical membrane pass occupies residues 86-106 (LEKLEYFFLIVFSIEAAMKII). The Cytoplasmic segment spans residues 107–115 (AYGFLFHQD). Residues 116 to 136 (AYLRSGWNVLDFIIVFLGVFT) form a helical membrane-spanning segment. Over 137 to 160 (VILEQVNIIQTNTAPMSSKGAGLD) the chain is Extracellular. Residues 161–179 (VKALRAFRVLRPLRLVSGV) traverse the membrane as a helical segment. The Cytoplasmic portion of the chain corresponds to 180–196 (PSLQVVLNSIFKAMLPL). Residues 197-218 (FHIALLVLFMVIIYAIIGLELF) form a helical membrane-spanning segment. Residues 219 to 279 (KGKMHKTCYF…HGITHFDNFG (61 aa)) lie on the Extracellular side of the membrane. Disulfide bonds link cysteine 226–cysteine 254 and cysteine 245–cysteine 261. An N-linked (GlcNAc...) asparagine glycan is attached at asparagine 257. Positions 280–301 (FSMLTVYQCISMEGWTDVLYWV) form an intramembrane region, pore-forming. The Selectivity filter of repeat I signature appears at 290–293 (SMEG). Residue glutamate 292 coordinates Ca(2+). Residues 302 to 309 (NDAIGNEW) are Extracellular-facing. The chain crosses the membrane as a helical span at residues 310 to 330 (PWIYFVTLILLGSFFILNLVL). The Cytoplasmic segment spans residues 331 to 432 (GVLSGEFTKE…WKCHDLVKSK (102 aa)). Positions 357–374 (QQLEEDLRGYMSWITQGE) are binding to the beta subunit. Phosphoserine is present on residues serine 393 and serine 397. The II repeat unit spans residues 418–664 (NRVFRWKCHD…VFLAIAVDNL (247 aa)). A helical membrane pass occupies residues 433-451 (VFYWLVILIVALNTLSIAS). Residues 452–462 (EHHNQPLWLTH) are Extracellular-facing. Residues 463–483 (LQDVANRVLLTLFTIEMLMKM) form a helical membrane-spanning segment. Residues 484-494 (YGLGLRQYFMS) are Cytoplasmic-facing. The chain crosses the membrane as a helical span at residues 495–514 (IFNRFDCFVVCSGILEILLV). Residues 515 to 523 (ESGAMSPLG) are Extracellular-facing. Residues 524–542 (ISVLRCIRLLRLFKITKYW) form a helical membrane-spanning segment. At 543-561 (TSLSNLVASLLNSIRSIAS) the chain is on the cytoplasmic side. A helical transmembrane segment spans residues 562-581 (LLLLLFLFIIIFALLGMQLF). The Extracellular segment spans residues 582 to 601 (GGRYDFEDTEVRRSNFDNFP). The pore-forming intramembrane region spans 602-623 (QALISVFQVLTGEDWNSVMYNG). A Selectivity filter of repeat II motif is present at residues 612–615 (TGED). Glutamate 614 contributes to the Ca(2+) binding site. Topologically, residues 624–633 (IMAYGGPTYP) are extracellular. A helical membrane pass occupies residues 634 to 653 (GVLVCIYFIILFVCGNYILL). Residues 654–799 (NVFLAIAVDN…VLCHRIVNAT (146 aa)) lie on the Cytoplasmic side of the membrane. 2 disordered regions span residues 675-712 (KAKAEERKRRKMSKGLPDKSEEERATVTKKLEQKSKGE) and 731-757 (EVKDPYPSADFPGDDEEDEPEIPVSPR). Serine 687 carries the phosphoserine; by PKA modification. Basic and acidic residues predominate over residues 690 to 711 (LPDKSEEERATVTKKLEQKSKG). The span at 742–751 (PGDDEEDEPE) shows a compositional bias: acidic residues. One copy of the III repeat lies at 768–1068 (EKAVPIPEAS…IFVGFVIVTF (301 aa)). The chain crosses the membrane as a helical span at residues 800-818 (WFTNFILLFILLSSAALAA). Residues 819-830 (EDPIRADSMRNQ) lie on the Extracellular side of the membrane. A helical membrane pass occupies residues 831-850 (ILEYFDYVFTAVFTVEIVLK). At 851–866 (MTTYGAFLHKGSFCRN) the chain is on the cytoplasmic side. Residues 867-885 (YFNILDLLVVAVSLISMGL) form a helical membrane-spanning segment. The Extracellular segment spans residues 886–892 (ESSAISV). Residues 893–911 (VKILRVLRVLRPLRAINRA) traverse the membrane as a helical segment. The Cytoplasmic segment spans residues 912 to 930 (KGLKHVVQCVFVAIRTIGN). A helical membrane pass occupies residues 931 to 950 (IVLVTTLLQFMFACIGVQLF). Residues 951 to 1000 (KGKFYSCNDLSKMTEEECRGYYYIYKDGDPTQIELRPRQWIHNDFHFDNV) lie on the Extracellular side of the membrane. Cysteine 957 and cysteine 968 form a disulfide bridge. Positions 988 to 1077 (RQWIHNDFHF…FQEQGETEYK (90 aa)) are dihydropyridine binding. The segment at residues 1001 to 1021 (LSAMMSLFTVSTFEGWPQLLY) is an intramembrane region (pore-forming). A Selectivity filter of repeat III motif is present at residues 1012–1015 (TFEG). Glutamate 1014 provides a ligand contact to Ca(2+). At 1022 to 1038 (KAIDSNEEDTGPVYNNR) the chain is on the extracellular side. The helical transmembrane segment at 1039 to 1060 (VEMAIFFIIYIILIAFFMMNIF) threads the bilayer. The Cytoplasmic segment spans residues 1061-1118 (VGFVIVTFQEQGETEYKNCELDKNQRQCVQYALKARPLRCYIPKNPYQYQVWYVVTSS). Residues 1105 to 1384 (NPYQYQVWYV…LFVAVIMDNF (280 aa)) form an IV repeat. The helical transmembrane segment at 1119-1140 (YFEYLMFALIMLNTICLGMQHY) threads the bilayer. Asparagine 1141 is a glycosylation site (N-linked (GlcNAc...) asparagine). The Extracellular portion of the chain corresponds to 1141–1148 (NQSEQMNH). The chain crosses the membrane as a helical span at residues 1149–1170 (ISDILNVAFTIIFTLEMVLKLI). The Cytoplasmic portion of the chain corresponds to 1171–1180 (AFKPRGYFGD). A helical transmembrane segment spans residues 1181–1200 (PWNVFDFLIVIGSIIDVILS). Over 1201–1231 (EIDTFLASSGGLYCLGGGCGNVDPDESARIS) the chain is Extracellular. A helical membrane pass occupies residues 1232–1250 (SAFFRLFRVMRLVKLLNRA). Over 1251 to 1268 (EGVRTLLWTFIKSFQALP) the chain is Cytoplasmic. Residues 1269–1289 (YVALLIVMLFFIYAVIGMQMF) form a helical membrane-spanning segment. Residues 1290–1311 (GKIAMVDGTQINRNNNFQTFPQ) lie on the Extracellular side of the membrane. An intramembrane region (pore-forming) is located at residues 1312–1330 (AVLLLFRCATGEAWQEILL). The Selectivity filter of repeat IV motif lies at 1321 to 1324 (TGEA). Residues 1331 to 1356 (ACSYGKLCDPESDYAPGEEHTCGTNF) lie on the Extracellular side of the membrane. The tract at residues 1337 to 1403 (LCDPESDYAP…LGPHHLDEFK (67 aa)) is dihydropyridine binding. Residues cysteine 1338 and cysteine 1352 are joined by a disulfide bond. 2 phenylalkylamine binding regions span residues 1349-1391 (EHTC…TRDW) and 1349-1392 (EHTC…RDWS). Residues 1357–1381 (AYYYFISFYMLCAFLIINLFVAVIM) form a helical membrane-spanning segment. Over 1382 to 1852 (DNFDYLTRDW…PEGGAVPWEP (471 aa)) the chain is Cytoplasmic. Residues 1522 to 1542 (KFYATFLIQEHFRKFMKRQEE) form an interaction with calmodulin region. Serine 1575 is modified (phosphoserine; by PKA and CAMK2). A Phosphothreonine modification is found at threonine 1579. Serine 1617 carries the phosphoserine; by PKA modification. 2 disordered regions span residues 1702–1721 (GPLSQPCRASGPHSRSHVDK) and 1727–1762 (TQRGMPEGQVPPSPCQVTGAKAEHPVQKEGKGPTSR). Over residues 1747–1757 (KAEHPVQKEGK) the composition is skewed to basic and acidic residues.

It belongs to the calcium channel alpha-1 subunit (TC 1.A.1.11) family. CACNA1S subfamily. Component of a calcium channel complex consisting of a pore-forming alpha subunit (CACNA1S) and the ancillary subunits CACNB1 or CACNB2, CACNG1 and CACNA2D1. The channel complex contains alpha, beta, gamma and delta subunits in a 1:1:1:1 ratio, i.e. it contains either CACNB1 or CACNB2. CACNA1S channel activity is modulated by the auxiliary subunits (CACNB1 or CACNB2, CACNG1 and CACNA2D1). Interacts with DYSF and JSRP1. Interacts with RYR1. Interacts with STAC, STAC2 and STAC3 (via their SH3 domains). Interacts with CALM. In terms of processing, the alpha-1S subunit is found in two isoforms in the skeletal muscle: a minor form of 212 kDa containing the complete amino acid sequence, and a major form of 190 kDa derived from the full-length form by post-translational proteolysis close to Phe-1690. Phosphorylated. Phosphorylation by PKA activates the calcium channel. Both the minor and major forms are phosphorylated in vitro by PKA. Phosphorylation at Ser-1575 is involved in beta-adrenergic-mediated regulation of the channel.

Its subcellular location is the cell membrane. It is found in the sarcolemma. The protein resides in the T-tubule. The catalysed reaction is Ca(2+)(in) = Ca(2+)(out). With respect to regulation, channel activity is blocked by dihydropyridines (DHP), phenylalkylamines, and by benzothiazepines. In terms of biological role, pore-forming, alpha-1S subunit of the voltage-gated calcium channel that gives rise to L-type calcium currents in skeletal muscle. Calcium channels containing the alpha-1S subunit play an important role in excitation-contraction coupling in skeletal muscle via their interaction with RYR1, which triggers Ca(2+) release from the sarcplasmic reticulum and ultimately results in muscle contraction. Long-lasting (L-type) calcium channels belong to the 'high-voltage activated' (HVA) group. The polypeptide is Voltage-dependent L-type calcium channel subunit alpha-1S (Cacna1s) (Mus musculus (Mouse)).